The sequence spans 359 residues: MGISCSHLEETMSKPPDCLLRMLRGTPRQRVFTFFIISFKFMFLISILIYWHTVGAPKDQREYSLPVDFSCPQLAFPRVSAPGNIFFLETSDRTSPNFLFMCSVESAARAHPESQVVVLMKGLPRDTTAQPRNLGISLLSCFPNVWIRPLDLQELFEDTPLAAWYSEARHRWEPYQLPVLSDASRIALLWKFGGIYLDTDFIVLKNLLNLTNTLGIQSRYVLNGAFLAFERKHEFLALCLHDFVANYNGWIWGHQGPQLLTRVFKKWCSIQSLEKSHACRGVTALPPEAFYPIPWQNWKKYFEDISPEELTQLLNATYAVHVWNKKSQGTHLEATSKALLAQLHARYCPTTHRAMKMYL.

At 1-30 the chain is on the cytoplasmic side; that stretch reads MGISCSHLEETMSKPPDCLLRMLRGTPRQR. The chain crosses the membrane as a helical; Signal-anchor for type II membrane protein span at residues 31-51; sequence VFTFFIISFKFMFLISILIYW. At 52–359 the chain is on the lumenal side; it reads HTVGAPKDQR…TTHRAMKMYL (308 aa). The DXD motif motif lies at 198–200; the sequence is DTD. N-linked (GlcNAc...) asparagine glycosylation is found at asparagine 209 and asparagine 315.

This sequence belongs to the glycosyltransferase 32 family.

The protein localises to the golgi apparatus membrane. It carries out the reaction a beta-D-Gal-(1-&gt;4)-beta-D-Glc-(1&lt;-&gt;1)-Cer(d18:1(4E)) + UDP-alpha-D-galactose = a globoside Gb3Cer (d18:1(4E)) + UDP + H(+). It catalyses the reaction a beta-D-Gal-(1&lt;-&gt;1')-ceramide + UDP-alpha-D-galactose = alpha-D-Gal-(1-&gt;4)-beta-D-Gal-(1&lt;-&gt;1')-Cer + UDP + H(+). Its pathway is glycolipid biosynthesis. Catalyzes the transfer of galactose from UDP-alpha-D-galactose to lactosylceramide/beta-D-galactosyl-(1-&gt;4)-beta-D-glucosyl-(1&lt;-&gt;1)-ceramide(d18:1(4E)) to produce globotriaosylceramide/globoside Gb3Cer (d18:1(4E)). Also able to transfer galactose to galactosylceramide/beta-D-Gal-(1&lt;-&gt;1')-Cer. Globoside Gb3Cer is a glycosphingolipid of the globo serie, one of the major types of neutral root structures of glycosphingolipids, that constitute a significant portion of mammalian cell membranes. The sequence is that of Lactosylceramide 4-alpha-galactosyltransferase from Mus musculus (Mouse).